A 635-amino-acid chain; its full sequence is Threonine--tRNA ligase (635 aa).

In terms of domain architecture, TGS spans 1–58; the sequence is MIHVTCNQEAFELPEGASAMDLANKMKQSHCFAGALINDQEKDLSTTLQDGDTVLFLT. The catalytic stretch occupies residues 237–528; the sequence is DHRVLGTKLD…LIEHFKGRFP (292 aa). Zn(2+) contacts are provided by cysteine 328, histidine 379, and histidine 505.

Belongs to the class-II aminoacyl-tRNA synthetase family. As to quaternary structure, homodimer. Zn(2+) serves as cofactor.

It is found in the cytoplasm. It carries out the reaction tRNA(Thr) + L-threonine + ATP = L-threonyl-tRNA(Thr) + AMP + diphosphate + H(+). In terms of biological role, catalyzes the attachment of threonine to tRNA(Thr) in a two-step reaction: L-threonine is first activated by ATP to form Thr-AMP and then transferred to the acceptor end of tRNA(Thr). Also edits incorrectly charged L-seryl-tRNA(Thr). The polypeptide is Threonine--tRNA ligase (Chlamydia trachomatis serovar A (strain ATCC VR-571B / DSM 19440 / HAR-13)).